The chain runs to 107 residues: RNA polymerase II transcriptional coactivator KIWI (107 aa).

A disordered region spans residues 1–40 (MSSRGKRKDEDVRASDDESETHAPAKKVAKPADDSDQSDD). A compositionally biased stretch (basic and acidic residues) spans 7 to 23 (RKDEDVRASDDESETHA).

Belongs to the transcriptional coactivator PC4 family.

Its subcellular location is the nucleus. General coactivator that functions cooperatively with TAFs and mediates functional interactions between upstream activators and the general transcriptional machinery. Binds single-stranded DNA. This chain is RNA polymerase II transcriptional coactivator KIWI (KIWI), found in Arabidopsis thaliana (Mouse-ear cress).